Consider the following 137-residue polypeptide: Small ribosomal subunit protein uS12 (137 aa).

The interval 1-23 is disordered; the sequence is MPTINQLVRKGRKSKSSKSDAPA. Aspartate 102 is modified (3-methylthioaspartic acid).

This sequence belongs to the universal ribosomal protein uS12 family. Part of the 30S ribosomal subunit. Contacts proteins S8 and S17. May interact with IF1 in the 30S initiation complex.

Its function is as follows. With S4 and S5 plays an important role in translational accuracy. In terms of biological role, interacts with and stabilizes bases of the 16S rRNA that are involved in tRNA selection in the A site and with the mRNA backbone. Located at the interface of the 30S and 50S subunits, it traverses the body of the 30S subunit contacting proteins on the other side and probably holding the rRNA structure together. The combined cluster of proteins S8, S12 and S17 appears to hold together the shoulder and platform of the 30S subunit. In Levilactobacillus brevis (strain ATCC 367 / BCRC 12310 / CIP 105137 / JCM 1170 / LMG 11437 / NCIMB 947 / NCTC 947) (Lactobacillus brevis), this protein is Small ribosomal subunit protein uS12.